Reading from the N-terminus, the 356-residue chain is Cysteine proteinase 3 (356 aa).

Residues 1-16 (MSRLSLVLILVAGLFA) form the signal peptide. Positions 17-138 (TALAGPATFA…KGNLKLTNVV (122 aa)) are cleaved as a propeptide — activation peptide. N-linked (GlcNAc...) asparagine glycosylation is present at Asn123. 2 disulfides stabilise this stretch: Cys160/Cys203 and Cys194/Cys236. Cys163 is a catalytic residue. The N-linked (GlcNAc...) asparagine glycan is linked to Asn252. Cys294 and Cys344 are disulfide-bonded. Active-site residues include His303 and Asn323.

Belongs to the peptidase C1 family. Predominantly expressed in stem and root.

The protein resides in the vacuole. The chain is Cysteine proteinase 3 (CYP-3) from Solanum lycopersicum (Tomato).